A 31-amino-acid polypeptide reads, in one-letter code: Cyclotide cter-C (31 aa).

The segment at residues 1-31 is a cross-link (cyclopeptide (Gly-Asp)); sequence GVPCAESCVWIPCTVTALLGCSCKDKVCYLD. Cystine bridges form between cysteine 4-cysteine 21, cysteine 8-cysteine 23, and cysteine 13-cysteine 28.

In terms of processing, contains 3 disulfide bonds. Post-translationally, this is a cyclic peptide.

Its function is as follows. Probably participates in a plant defense mechanism. In Clitoria ternatea (Butterfly pea), this protein is Cyclotide cter-C.